We begin with the raw amino-acid sequence, 175 residues long: Large ribosomal subunit protein uL6 (175 aa).

This sequence belongs to the universal ribosomal protein uL6 family. As to quaternary structure, part of the 50S ribosomal subunit.

In terms of biological role, this protein binds to the 23S rRNA, and is important in its secondary structure. It is located near the subunit interface in the base of the L7/L12 stalk, and near the tRNA binding site of the peptidyltransferase center. The protein is Large ribosomal subunit protein uL6 of Xylella fastidiosa (strain M23).